The sequence spans 619 residues: tRNA (guanine(37)-N(1))-methyltransferase 2 (619 aa).

Residues 1–10 constitute a mitochondrion transit peptide; the sequence is MVSKLSLFRA. Residues R434, 472 to 473, 500 to 501, and N523 each bind S-adenosyl-L-methionine; these read DL and DG.

The protein belongs to the class I-like SAM-binding methyltransferase superfamily. TRM5/TYW2 family. In terms of assembly, monomer.

The protein localises to the mitochondrion matrix. It is found in the nucleus. It localises to the cytoplasm. The enzyme catalyses guanosine(37) in tRNA + S-adenosyl-L-methionine = N(1)-methylguanosine(37) in tRNA + S-adenosyl-L-homocysteine + H(+). Its function is as follows. Specifically methylates the N1 position of guanosine-37 in various cytoplasmic and mitochondrial tRNAs. Methylation is not dependent on the nature of the nucleoside 5' of the target nucleoside. This is the first step in the biosynthesis of wybutosine (yW), a modified base adjacent to the anticodon of tRNAs and required for accurate decoding. The polypeptide is tRNA (guanine(37)-N(1))-methyltransferase 2 (Arabidopsis thaliana (Mouse-ear cress)).